We begin with the raw amino-acid sequence, 327 residues long: tRNA uridine(34) hydroxylase (327 aa).

A Rhodanese domain is found at 130–224 (LDEDTVVLDT…YGKDPEVRGE (95 aa)). Residue Cys-184 is the Cysteine persulfide intermediate of the active site.

This sequence belongs to the TrhO family.

The catalysed reaction is uridine(34) in tRNA + AH2 + O2 = 5-hydroxyuridine(34) in tRNA + A + H2O. Functionally, catalyzes oxygen-dependent 5-hydroxyuridine (ho5U) modification at position 34 in tRNAs. The polypeptide is tRNA uridine(34) hydroxylase (Streptococcus suis (strain 98HAH33)).